The following is a 175-amino-acid chain: MTTIVSVRRNGQVVVGGDGQVSLGNTVMKGNARKVRRLYNGKVLAGFAGGTADAFTLFELFERKLEMHQGHLLKSAVELAKDWRTDRALRKLEAMLIVADEKESLIITGIGDVVQPEEDQILAIGSGGNYALSAARALVENTELSAHEIVEKSLRIAGDICVFTNTNFTIEELPN.

T2 is an active-site residue. Na(+) is bound by residues G158, C161, and T164.

It belongs to the peptidase T1B family. HslV subfamily. In terms of assembly, a double ring-shaped homohexamer of HslV is capped on each side by a ring-shaped HslU homohexamer. The assembly of the HslU/HslV complex is dependent on binding of ATP.

The protein resides in the cytoplasm. It catalyses the reaction ATP-dependent cleavage of peptide bonds with broad specificity.. Its activity is regulated as follows. Allosterically activated by HslU binding. Protease subunit of a proteasome-like degradation complex believed to be a general protein degrading machinery. The sequence is that of ATP-dependent protease subunit HslV from Haemophilus influenzae (strain ATCC 51907 / DSM 11121 / KW20 / Rd).